The sequence spans 475 residues: UDP-glucosyltransferase UGT13248 (475 aa).

Positions 1–17 (METTVTAVSGTTSSSVG) are enriched in low complexity. The interval 1–20 (METTVTAVSGTTSSSVGHGA) is disordered. Residues His-38, Ser-152, Thr-299, Cys-352, 369–377 (HCGWNSTLE), and 393–394 (DQ) each bind UDP-alpha-D-glucose.

The protein belongs to the UDP-glycosyltransferase family.

In terms of biological role, involved in the detoxification of the Fusarium mycotoxin deoxynivalenol by the transfer of glucose from UDP-D-glucose to the hydroxyl group at C-3, forming deoxynivalenol-3-O-beta-D-glucoside. In Hordeum vulgare subsp. vulgare (Domesticated barley), this protein is UDP-glucosyltransferase UGT13248.